We begin with the raw amino-acid sequence, 520 residues long: RNA polymerase sigma factor sigA (520 aa).

A chloroplast-targeting transit peptide spans 1–66 (MTATPAVIGL…APATPKLTAV (66 aa)). Residues 37–49 (GGGGGGGGGGGGD) are compositionally biased toward gly residues. 3 disordered regions span residues 37–57 (GGGGGGGGGGGGDAMSFAPPA), 87–117 (HHSSAAAALAPPPPPPPPPTPSPASRAAHAH), and 171–190 (SVSARQRRMSGRRRGRTKNG). Over residues 96-108 (APPPPPPPPPTPS) the composition is skewed to pro residues. Residues 175 to 187 (RQRRMSGRRRGRT) show a composition bias toward basic residues. The Polymerase core binding signature appears at 305–318 (DLIQGGLIGLLRGI). Positions 479 to 498 (WEDISRQFGLSRERVRQVGL) form a DNA-binding region, H-T-H motif.

It belongs to the sigma-70 factor family. As to expression, expressed in shoots. Expressed in the tips of fully elongated leaves. Expressed in leaf blades.

It is found in the plastid. Its subcellular location is the chloroplast. Sigma factors are initiation factors that promote the attachment of plastid-encoded RNA polymerase (PEP) to specific initiation sites and are then released. Controls the transcription of the psaA and psaB genes in chloroplast, and thus maintains the abundance of the core protein complex PsaA-PsaB of photosystem I (PSI) in the thylakoid membrane. Maintains PSI activity, sufficient rate of electron transfer from PSII to PSI, and photochemical efficiency. This chain is RNA polymerase sigma factor sigA, found in Oryza sativa subsp. japonica (Rice).